A 78-amino-acid chain; its full sequence is Glycophorin-E (78 aa).

The first 19 residues, 1–19 (MYGKIIFVLLLSGIVSISA), serve as a signal peptide directing secretion. Residues 20–52 (SSTTGVAMHTSTSSSVTKSYISSQTNGITLINW) are Extracellular-facing. A helical transmembrane segment spans residues 53 to 73 (WAMARVIFEVMLVVVGMIILI). Over 74-78 (SYCIR) the chain is Cytoplasmic.

The protein belongs to the glycophorin-A family. Post-translationally, the N-terminal extracellular domain is heavily glycosylated on serine and threonine residues. Erythrocytes.

The protein resides in the membrane. In terms of biological role, this protein is a minor sialoglycoprotein in human erythrocyte membranes. The protein is Glycophorin-E (GYPE) of Homo sapiens (Human).